The following is a 161-amino-acid chain: S-protein homolog 2 (161 aa).

A signal peptide spans 1–24 (MDIPKQYLSLFILIIFITTKLSQA). N-linked (GlcNAc...) asparagine glycans are attached at residues N75, N106, and N157.

It belongs to the plant self-incompatibility (S1) protein family.

It is found in the secreted. In Arabidopsis thaliana (Mouse-ear cress), this protein is S-protein homolog 2.